The chain runs to 162 residues: Transcription elongation factor GreA (162 aa).

The stretch at 44-69 (SENAEYEAAREKQAFVEARIKHLEDI) forms a coiled coil.

This sequence belongs to the GreA/GreB family.

In terms of biological role, necessary for efficient RNA polymerase transcription elongation past template-encoded arresting sites. The arresting sites in DNA have the property of trapping a certain fraction of elongating RNA polymerases that pass through, resulting in locked ternary complexes. Cleavage of the nascent transcript by cleavage factors such as GreA or GreB allows the resumption of elongation from the new 3'terminus. GreA releases sequences of 2 to 3 nucleotides. This Rickettsia bellii (strain RML369-C) protein is Transcription elongation factor GreA.